Here is a 171-residue protein sequence, read N- to C-terminus: Cytochrome c oxidase subunit 5, mitochondrial (171 aa).

The N-terminal 27 residues, 1 to 27 (MLRTPTVSALVRNVAVRAAKPTMAVRA), are a transit peptide targeting the mitochondrion. At 28-100 (ASTMPISNPT…ALPPPGEQKK (73 aa)) the chain is on the mitochondrial matrix side. Residues 101–123 (VLAYTVAGVFLSFVIFATMRAFA) form a helical membrane-spanning segment. Residues 124-171 (KPPPATMTKEWQEATNEFLKAQKSDPLTGLTSEGYNGKGHVQSPSASA) are Mitochondrial intermembrane-facing. The tract at residues 145–171 (QKSDPLTGLTSEGYNGKGHVQSPSASA) is disordered.

Belongs to the cytochrome c oxidase IV family. As to quaternary structure, component of the cytochrome c oxidase (complex IV, CIV), a multisubunit enzyme composed of 11 subunits. The complex is composed of a catalytic core of 3 subunits Cox1, Cox2 and Cox3, encoded in the mitochondrial DNA, and 8 supernumerary subunits Cox4, Cox5a/Cox5, Cox6, Cox7, Cox8, Cox7a/Cox9, Cox6b/Cox12 and Cox6a/Cox13, which are encoded in the nuclear genome. The complex exists as a monomer or a dimer and forms respiratory supercomplexes (SCs) in the inner mitochondrial membrane with NADH-ubiquinone oxidoreductase (complex I, CI) and ubiquinol-cytochrome c oxidoreductase (cytochrome b-c1 complex, complex III, CIII), resulting in various different assemblies (supercomplexes I(1)IV(1), I(1)III(3)IV(2), III(2)IV(1) and III(2)IV(2) as well as larger supercomplexes of compositions like I(1)III(2)IV(5-6)).

The protein localises to the mitochondrion inner membrane. It functions in the pathway energy metabolism; oxidative phosphorylation. Component of the cytochrome c oxidase, the last enzyme in the mitochondrial electron transport chain which drives oxidative phosphorylation. The respiratory chain contains 3 multisubunit complexes succinate dehydrogenase (complex II, CII), ubiquinol-cytochrome c oxidoreductase (cytochrome b-c1 complex, complex III, CIII) and cytochrome c oxidase (complex IV, CIV), that cooperate to transfer electrons derived from NADH and succinate to molecular oxygen, creating an electrochemical gradient over the inner membrane that drives transmembrane transport and the ATP synthase. Cytochrome c oxidase is the component of the respiratory chain that catalyzes the reduction of oxygen to water. Electrons originating from reduced cytochrome c in the intermembrane space (IMS) are transferred via the dinuclear copper A center (CU(A)) of Cox2 and heme A of Cox1 to the active site in Cox1, a binuclear center (BNC) formed by heme A3 and copper B (CU(B)). The BNC reduces molecular oxygen to 2 water molecules using 4 electrons from cytochrome c in the IMS and 4 protons from the mitochondrial matrix. The chain is Cytochrome c oxidase subunit 5, mitochondrial (cya-4) from Neurospora crassa (strain ATCC 24698 / 74-OR23-1A / CBS 708.71 / DSM 1257 / FGSC 987).